A 300-amino-acid chain; its full sequence is Ribosomal protein bS6--L-glutamate ligase (300 aa).

Positions 104–287 constitute an ATP-grasp domain; the sequence is LQLLARQGID…IAGRMIQWIE (184 aa). ATP is bound by residues Lys-141, 178-179, Asp-187, and 211-213; these read EY and RSN. Residues Asp-248, Glu-260, and Asn-262 each coordinate Mg(2+). Positions 248, 260, and 262 each coordinate Mn(2+).

Belongs to the RimK family. Mg(2+) is required as a cofactor. Requires Mn(2+) as cofactor.

Functionally, an L-glutamate ligase that catalyzes the ATP-dependent post-translational addition of glutamate residues to the C-terminus of ribosomal protein bS6 (RpsF). Is also able to catalyze the synthesis of poly-alpha-glutamate in vitro, via ATP hydrolysis from unprotected glutamate as substrate. The number of glutamate residues added to either RpsF or to poly-alpha-glutamate changes with pH. The polypeptide is Ribosomal protein bS6--L-glutamate ligase (Salmonella agona (strain SL483)).